We begin with the raw amino-acid sequence, 124 residues long: Class I hydrophobin 1 (124 aa).

Positions 1–18 (MRFSIATVVLSLAAMVVA) are cleaved as a signal peptide. 4 disulfide bridges follow: Cys-35–Cys-85, Cys-43–Cys-79, Cys-44–Cys-63, and Cys-86–Cys-97.

It belongs to the fungal hydrophobin family.

The protein localises to the secreted. It is found in the cell wall. In terms of biological role, aerial growth, conidiation, and dispersal of filamentous fungi in the environment rely upon a capability of their secreting small amphipathic proteins called hydrophobins (HPBs) with low sequence identity. Class I can self-assemble into an outermost layer of rodlet bundles on aerial cell surfaces, conferring cellular hydrophobicity that supports fungal growth, development and dispersal; whereas Class II form highly ordered films at water-air interfaces through intermolecular interactions but contribute nothing to the rodlet structure. In Botryotinia fuckeliana, hydrophobins are not involved in conferring surface hydrophobicity to conidia and aerial hyphae and their function in sclerotia and fruiting bodies remains to be investigated. The polypeptide is Class I hydrophobin 1 (Bhp1) (Botryotinia fuckeliana (strain B05.10) (Noble rot fungus)).